We begin with the raw amino-acid sequence, 419 residues long: Pyrrolysine--tRNA ligase (419 aa).

Residues 100-157 (APKVKKAMPKSVSRAPKPLENSVSAKASTNTSRSVPSPAKSTPNSSVPASAPAPSLTR) form a disordered region. Over residues 120-141 (NSVSAKASTNTSRSVPSPAKST) the composition is skewed to polar residues. Residues 142–154 (PNSSVPASAPAPS) are compositionally biased toward low complexity.

Belongs to the class-II aminoacyl-tRNA synthetase family.

It localises to the cytoplasm. The enzyme catalyses tRNA(Pyl) + L-pyrrolysine + ATP = L-pyrrolysyl-tRNA(Pyl) + AMP + diphosphate. Its function is as follows. Catalyzes the attachment of pyrrolysine to tRNA(Pyl). Pyrrolysine is a lysine derivative encoded by the termination codon UAG. The sequence is that of Pyrrolysine--tRNA ligase (pylS) from Methanosarcina barkeri.